The chain runs to 300 residues: Iron-dependent extradiol dioxygenase (300 aa).

VOC domains are found at residues 5-120 and 142-270; these read SLAY…AFHG and GLGH…FGCE. Fe cation is bound at residue His145. 4 residues coordinate substrate: His200, His215, Asp250, and Tyr256. Position 215 (His215) interacts with Fe cation. Glu266 contributes to the Fe cation binding site.

The protein belongs to the extradiol ring-cleavage dioxygenase family. In terms of assembly, homodimer. Fe(2+) is required as a cofactor.

The catalysed reaction is 3,4-dihydroxy-9,10-secoandrosta-1,3,5(10)-triene-9,17-dione + O2 = (1E,2Z)-3-hydroxy-5,9,17-trioxo-4,5:9,10-disecoandrosta-1(10),2-dien-4-oate + H(+). It functions in the pathway steroid metabolism; cholesterol metabolism. Its function is as follows. Catalyzes the meta-cleavage of 3,4-dihydroxy-9,10-seconandrost-1,3,5(10)-triene-9,17-dione (3,4-DHSA) to produce 4,5-9,10-diseco-3-hydroxy-5,9,17-trioxoandrosta-1(10),2-diene-4-oic acid (4,9-DSHA). Also involved in biphenyl and polychlorinated biphenyls (PCBs) degradation. The polypeptide is Iron-dependent extradiol dioxygenase (hsaC) (Rhodococcus jostii (strain RHA1)).